Reading from the N-terminus, the 55-residue chain is MKKEIQVQGVRYYVESEDDLVSVAHELAKMGYTVQQIANALGVSERKVRRYLESC.

This is an uncharacterized protein from Sulfolobus islandicus rod-shaped virus 1 (SIRV-1).